We begin with the raw amino-acid sequence, 439 residues long: Methylenetetrahydrofolate--tRNA-(uracil-5-)-methyltransferase TrmFO (439 aa).

9 to 14 provides a ligand contact to FAD; sequence GAGLAG.

It belongs to the MnmG family. TrmFO subfamily. FAD is required as a cofactor.

The protein resides in the cytoplasm. It carries out the reaction uridine(54) in tRNA + (6R)-5,10-methylene-5,6,7,8-tetrahydrofolate + NADH + H(+) = 5-methyluridine(54) in tRNA + (6S)-5,6,7,8-tetrahydrofolate + NAD(+). The catalysed reaction is uridine(54) in tRNA + (6R)-5,10-methylene-5,6,7,8-tetrahydrofolate + NADPH + H(+) = 5-methyluridine(54) in tRNA + (6S)-5,6,7,8-tetrahydrofolate + NADP(+). Catalyzes the folate-dependent formation of 5-methyl-uridine at position 54 (M-5-U54) in all tRNAs. The chain is Methylenetetrahydrofolate--tRNA-(uracil-5-)-methyltransferase TrmFO from Desulforudis audaxviator (strain MP104C).